Here is a 144-residue protein sequence, read N- to C-terminus: D-aminoacyl-tRNA deacylase (144 aa).

A Gly-cisPro motif, important for rejection of L-amino acids motif is present at residues 136-137; that stretch reads GP.

The protein belongs to the DTD family. In terms of assembly, homodimer.

It is found in the cytoplasm. The enzyme catalyses glycyl-tRNA(Ala) + H2O = tRNA(Ala) + glycine + H(+). The catalysed reaction is a D-aminoacyl-tRNA + H2O = a tRNA + a D-alpha-amino acid + H(+). In terms of biological role, an aminoacyl-tRNA editing enzyme that deacylates mischarged D-aminoacyl-tRNAs. Also deacylates mischarged glycyl-tRNA(Ala), protecting cells against glycine mischarging by AlaRS. Acts via tRNA-based rather than protein-based catalysis; rejects L-amino acids rather than detecting D-amino acids in the active site. By recycling D-aminoacyl-tRNA to D-amino acids and free tRNA molecules, this enzyme counteracts the toxicity associated with the formation of D-aminoacyl-tRNA entities in vivo and helps enforce protein L-homochirality. The sequence is that of D-aminoacyl-tRNA deacylase from Haemophilus influenzae (strain 86-028NP).